A 296-amino-acid polypeptide reads, in one-letter code: 4-hydroxybenzoate octaprenyltransferase (296 aa).

8 helical membrane passes run 28–48 (PIGI…AGKG), 52–72 (LINI…GCVI), 102–122 (ALVF…LTNA), 146–166 (YYPQ…AFTA), 169–189 (GDLP…TVGY), 219–239 (VIIL…GARF), 241–261 (LGGW…WEFW), and 275–295 (FLHN…DYAF).

The protein belongs to the UbiA prenyltransferase family. It depends on Mg(2+) as a cofactor.

The protein resides in the cell inner membrane. The catalysed reaction is all-trans-octaprenyl diphosphate + 4-hydroxybenzoate = 4-hydroxy-3-(all-trans-octaprenyl)benzoate + diphosphate. The protein operates within cofactor biosynthesis; ubiquinone biosynthesis. In terms of biological role, catalyzes the prenylation of para-hydroxybenzoate (PHB) with an all-trans polyprenyl group. Mediates the second step in the final reaction sequence of ubiquinone-8 (UQ-8) biosynthesis, which is the condensation of the polyisoprenoid side chain with PHB, generating the first membrane-bound Q intermediate 3-octaprenyl-4-hydroxybenzoate. The chain is 4-hydroxybenzoate octaprenyltransferase from Pseudomonas fluorescens (strain SBW25).